A 180-amino-acid chain; its full sequence is NADH-quinone oxidoreductase subunit I (180 aa).

4Fe-4S ferredoxin-type domains lie at 48 to 80 (IVLT…LQKA) and 90 to 119 (EFFR…LTPD). Positions 60, 63, 66, 70, 99, 102, 105, and 109 each coordinate [4Fe-4S] cluster.

Belongs to the complex I 23 kDa subunit family. In terms of assembly, NDH-1 is composed of 13 different subunits. Subunits NuoA, H, J, K, L, M, N constitute the membrane sector of the complex. It depends on [4Fe-4S] cluster as a cofactor.

The protein localises to the cell inner membrane. The catalysed reaction is a quinone + NADH + 5 H(+)(in) = a quinol + NAD(+) + 4 H(+)(out). Functionally, NDH-1 shuttles electrons from NADH, via FMN and iron-sulfur (Fe-S) centers, to quinones in the respiratory chain. The immediate electron acceptor for the enzyme in this species is believed to be ubiquinone. Couples the redox reaction to proton translocation (for every two electrons transferred, four hydrogen ions are translocated across the cytoplasmic membrane), and thus conserves the redox energy in a proton gradient. The polypeptide is NADH-quinone oxidoreductase subunit I (Erwinia tasmaniensis (strain DSM 17950 / CFBP 7177 / CIP 109463 / NCPPB 4357 / Et1/99)).